The primary structure comprises 843 residues: Protein P (843 aa).

Residues 1-177 (MPLSYQHFRK…FCGSPYSWEQ (177 aa)) form a terminal protein domain (TP) region. Residues 178–346 (ELQHGRLVLQ…HCLFHIVNLI (169 aa)) are spacer. Disordered stretches follow at residues 221–240 (SRLGPQPTQGQLAGLQQGGS) and 289–315 (VSTSKRHSSSGNAVELHHVPPNSSRSQ). Residues 223–235 (LGPQPTQGQLAGL) are compositionally biased toward low complexity. Positions 347–690 (DDWGPCAEHG…YLNLYPVARQ (344 aa)) are polymerase/reverse transcriptase domain (RT). The Reverse transcriptase domain occupies 357–600 (EHRIRTPRTP…YSLNFMGYVI (244 aa)). Mg(2+)-binding residues include D429, D551, and D552.

This sequence belongs to the hepadnaviridae P protein family.

It catalyses the reaction DNA(n) + a 2'-deoxyribonucleoside 5'-triphosphate = DNA(n+1) + diphosphate. The catalysed reaction is Endonucleolytic cleavage to 5'-phosphomonoester.. Its activity is regulated as follows. Activated by host HSP70 and HSP40 in vitro to be able to bind the epsilon loop of the pgRNA. Because deletion of the RNase H region renders the protein partly chaperone-independent, the chaperones may be needed indirectly to relieve occlusion of the RNA-binding site by this domain. Inhibited by several reverse-transcriptase inhibitors: Lamivudine, Adefovir and Entecavir. Multifunctional enzyme that converts the viral RNA genome into dsDNA in viral cytoplasmic capsids. This enzyme displays a DNA polymerase activity that can copy either DNA or RNA templates, and a ribonuclease H (RNase H) activity that cleaves the RNA strand of RNA-DNA heteroduplexes in a partially processive 3'- to 5'-endonucleasic mode. Neo-synthesized pregenomic RNA (pgRNA) are encapsidated together with the P protein, and reverse-transcribed inside the nucleocapsid. Initiation of reverse-transcription occurs first by binding the epsilon loop on the pgRNA genome, and is initiated by protein priming, thereby the 5'-end of (-)DNA is covalently linked to P protein. Partial (+)DNA is synthesized from the (-)DNA template and generates the relaxed circular DNA (RC-DNA) genome. After budding and infection, the RC-DNA migrates in the nucleus, and is converted into a plasmid-like covalently closed circular DNA (cccDNA). The activity of P protein does not seem to be necessary for cccDNA generation, and is presumably released from (+)DNA by host nuclear DNA repair machinery. In Homo sapiens (Human), this protein is Protein P.